The chain runs to 327 residues: Undecaprenyl-phosphate 4-deoxy-4-formamido-L-arabinose transferase (327 aa).

2 helical membrane-spanning segments follow: residues Leu-235 to Val-255 and Val-270 to Leu-290.

It belongs to the glycosyltransferase 2 family.

Its subcellular location is the cell inner membrane. It carries out the reaction UDP-4-deoxy-4-formamido-beta-L-arabinose + di-trans,octa-cis-undecaprenyl phosphate = 4-deoxy-4-formamido-alpha-L-arabinopyranosyl di-trans,octa-cis-undecaprenyl phosphate + UDP. It functions in the pathway glycolipid biosynthesis; 4-amino-4-deoxy-alpha-L-arabinose undecaprenyl phosphate biosynthesis; 4-amino-4-deoxy-alpha-L-arabinose undecaprenyl phosphate from UDP-4-deoxy-4-formamido-beta-L-arabinose and undecaprenyl phosphate: step 1/2. It participates in bacterial outer membrane biogenesis; lipopolysaccharide biosynthesis. Functionally, catalyzes the transfer of 4-deoxy-4-formamido-L-arabinose from UDP to undecaprenyl phosphate. The modified arabinose is attached to lipid A and is required for resistance to polymyxin and cationic antimicrobial peptides. This Yersinia pseudotuberculosis serotype IB (strain PB1/+) protein is Undecaprenyl-phosphate 4-deoxy-4-formamido-L-arabinose transferase.